Here is a 353-residue protein sequence, read N- to C-terminus: Quinolinate synthase (353 aa).

Iminosuccinate contacts are provided by His-47 and Ser-68. Cys-113 is a [4Fe-4S] cluster binding site. Iminosuccinate-binding positions include 139–141 and Ser-156; that span reads YAN. Residue Cys-200 coordinates [4Fe-4S] cluster. Iminosuccinate contacts are provided by residues 226 to 228 and Thr-243; that span reads HPE. Position 297 (Cys-297) interacts with [4Fe-4S] cluster.

This sequence belongs to the quinolinate synthase family. Type 1 subfamily. It depends on [4Fe-4S] cluster as a cofactor.

It is found in the cytoplasm. The catalysed reaction is iminosuccinate + dihydroxyacetone phosphate = quinolinate + phosphate + 2 H2O + H(+). It functions in the pathway cofactor biosynthesis; NAD(+) biosynthesis; quinolinate from iminoaspartate: step 1/1. Functionally, catalyzes the condensation of iminoaspartate with dihydroxyacetone phosphate to form quinolinate. This chain is Quinolinate synthase, found in Vibrio vulnificus (strain CMCP6).